The following is a 212-amino-acid chain: Large ribosomal subunit protein uL3 (212 aa).

Gln152 is modified (N5-methylglutamine).

It belongs to the universal ribosomal protein uL3 family. In terms of assembly, part of the 50S ribosomal subunit. Forms a cluster with proteins L14 and L19. In terms of processing, methylated by PrmB.

One of the primary rRNA binding proteins, it binds directly near the 3'-end of the 23S rRNA, where it nucleates assembly of the 50S subunit. This Chromohalobacter salexigens (strain ATCC BAA-138 / DSM 3043 / CIP 106854 / NCIMB 13768 / 1H11) protein is Large ribosomal subunit protein uL3.